The following is a 268-amino-acid chain: Probable intron-encoded DNA endonuclease 1 (268 aa).

Belongs to the LAGLIDADG endonuclease family.

It is found in the mitochondrion. Mitochondrial DNA endonuclease involved in intron homing. This chain is Probable intron-encoded DNA endonuclease 1 (hegI1), found in Mycosarcoma maydis (Corn smut fungus).